The sequence spans 388 residues: Processive diacylglycerol beta-glucosyltransferase (388 aa).

It belongs to the glycosyltransferase 28 family. UgtP subfamily.

It is found in the cell membrane. It carries out the reaction a 1,2-diacyl-3-O-(beta-D-glucopyranosyl)-sn-glycerol + UDP-alpha-D-glucose = a 1,2-diacyl-3-O-(beta-D-Glc-(1-&gt;6)-beta-D-Glc)-sn-glycerol + UDP + H(+). The catalysed reaction is a 1,2-diacyl-3-O-(beta-D-Glc-(1-&gt;6)-beta-D-Glc)-sn-glycerol + UDP-alpha-D-glucose = a 1,2-diacyl-3-O-(beta-D-Glc-(1-&gt;6)-beta-D-Glc-(1-&gt;6)-beta-D-Glc)-sn-glycerol + UDP + H(+). The enzyme catalyses a 1,2-diacyl-sn-glycerol + UDP-alpha-D-glucose = a 1,2-diacyl-3-O-(beta-D-glucopyranosyl)-sn-glycerol + UDP + H(+). It participates in glycolipid metabolism; diglucosyl-diacylglycerol biosynthesis. In terms of biological role, processive glucosyltransferase involved in the biosynthesis of both the bilayer- and non-bilayer-forming membrane glucolipids. Is able to successively transfer up to three glucosyl residues to diacylglycerol (DAG), thereby catalyzing the formation of beta-monoglucosyl-DAG (3-O-(beta-D-glucopyranosyl)-1,2-diacyl-sn-glycerol), beta-diglucosyl-DAG (3-O-(beta-D-glucopyranosyl-beta-(1-&gt;6)-D-glucopyranosyl)-1,2-diacyl-sn-glycerol) and beta-triglucosyl-DAG (3-O-(beta-D-glucopyranosyl-beta-(1-&gt;6)-D-glucopyranosyl-beta-(1-&gt;6)-D-glucopyranosyl)-1,2-diacyl-sn-glycerol). Beta-diglucosyl-DAG is the predominant glycolipid found in Bacillales and is also used as a membrane anchor for lipoteichoic acid (LTA). The chain is Processive diacylglycerol beta-glucosyltransferase from Bacillus cereus (strain ATCC 14579 / DSM 31 / CCUG 7414 / JCM 2152 / NBRC 15305 / NCIMB 9373 / NCTC 2599 / NRRL B-3711).